The following is a 435-amino-acid chain: ATP-dependent RNA helicase RhlB (435 aa).

The short motif at 9 to 37 is the Q motif element; the sequence is QKFADLGLNPQVVEGLEKKGFEFCTPIQA. The region spanning 40-219 is the Helicase ATP-binding domain; sequence LPVLLSGQDI…FEHMHNPEHV (180 aa). 53-60 serves as a coordination point for ATP; the sequence is AQTGTGKT. The short motif at 165-168 is the DEAD box element; that stretch reads DEAD. The 146-residue stretch at 245 to 390 folds into the Helicase C-terminal domain; the sequence is ALLQTLIEEE…VSDYDSSALI (146 aa). Positions 395-435 are disordered; it reads APVRTPSARNQQRRTNTGGARSGDRKSNNRRPRQPRQHKEA. Over residues 401-413 the composition is skewed to polar residues; the sequence is SARNQQRRTNTGG. Residues 422–435 show a composition bias toward basic residues; that stretch reads NNRRPRQPRQHKEA.

Belongs to the DEAD box helicase family. RhlB subfamily. In terms of assembly, component of the RNA degradosome, which is a multiprotein complex involved in RNA processing and mRNA degradation.

The protein localises to the cytoplasm. The enzyme catalyses ATP + H2O = ADP + phosphate + H(+). Its function is as follows. DEAD-box RNA helicase involved in RNA degradation. Has RNA-dependent ATPase activity and unwinds double-stranded RNA. The protein is ATP-dependent RNA helicase RhlB of Vibrio vulnificus (strain YJ016).